A 79-amino-acid chain; its full sequence is MRKEVQEYILANEERKRFIREQPIWYRRLSRKPDDLSSFQLEMMNFYEKTIPHRVNQFTNGIQMAQMMMQMFQAMRTKD.

This is an uncharacterized protein from Bacillus subtilis (strain 168).